A 365-amino-acid polypeptide reads, in one-letter code: NADH-quinone oxidoreductase subunit H 2 (365 aa).

A run of 8 helical transmembrane segments spans residues 1-21 (MFVV…VVWA), 71-91 (LAPV…PFAP), 100-120 (VGVF…FLAG), 136-156 (IAQV…VVLI), 199-219 (FVSW…VFFI), 254-274 (ILFL…VVLF), 301-321 (IAGY…VVFL), and 342-362 (WKIL…WVVW).

This sequence belongs to the complex I subunit 1 family. NDH-1 is composed of 14 different subunits. Subunits NuoA, H, J, K, L, M, N constitute the membrane sector of the complex.

It is found in the cell inner membrane. The enzyme catalyses a quinone + NADH + 5 H(+)(in) = a quinol + NAD(+) + 4 H(+)(out). NDH-1 shuttles electrons from NADH, via FMN and iron-sulfur (Fe-S) centers, to quinones in the respiratory chain. The immediate electron acceptor for the enzyme in this species is believed to be ubiquinone. Couples the redox reaction to proton translocation (for every two electrons transferred, four hydrogen ions are translocated across the cytoplasmic membrane), and thus conserves the redox energy in a proton gradient. This subunit may bind ubiquinone. The polypeptide is NADH-quinone oxidoreductase subunit H 2 (Cytophaga hutchinsonii (strain ATCC 33406 / DSM 1761 / CIP 103989 / NBRC 15051 / NCIMB 9469 / D465)).